Reading from the N-terminus, the 1190-residue chain is MKEEASEHGGSADETQELSPVSDSSDEMPNNAKRRRRSQSMIANKRIHQAFQEDEGDEDWEEEEHKPKAKRRYNTRSNESFSEGDDEPFEVSESSALEDELSDSEDSFIRSVRSKPKYKPGTRRSTRLRNRRSQDEEESEEEHRPILRERTSRINYSVPLAFPPVDEMDGDPSSQVNQSRSRKTHSELAITKLLRQQVSSFMPYIDSSGSESESDNTRIKKSSAKTIKALTDPANSGGPPDFGRIREKSDLADSDPLGVDSSLSFESVGGLDNYINQLKEMVMLPLLYPEIFQRFNMQPPRGVLFHGPPGTGKTLMARALAAACSSENKKVSFYMRKGADCLSKWVGEAERQLRLLFEEAKSTQPSIIFFDEIDGLAPVRSSKQEQIHASIVSTLLALMDGMESRGQVIIIGATNRPDAVDPALRRPGRFDREFYFPLPDRDARKKIIEIHTRNWDPPVPEWLCSMLAEKSKGYGGADLRALCTEAALNSIKRTYPQLYRSTKRLQIDPKTIKVKVKDFVMSMKRMIPSSERSSISPSKPLSPELKPLLNEAFQDIEKTLQKLMPVASKLNPLEEVMYDDPKENDFEYQQRLETFETLRIYKPRFLICGRKGLGQTALGPAILQQYEGVHVQSFDMSTLLQDSTQSIETSIIHLFLEVRRHTPSIIYIPDIDNWLNVLPLTAITTFSSMLERLDFSDQILFLALSSSPLSELHPQLREWFSSKQSVYSLQYPTRDSIIAFFQPILELIKASPTELPGGIPRKRRVLPELPLAPDPPPFTSQKITLKQTKQADMRLLNKLKIKLNALLGSLRARYRKFKKPLIDFNDIYCVDPETGHSYRSREECHYEFVDDVVKQIGSDQKFSMMSLEEIEKRTWDNCYCTPKQFVHDIKLILRDALQLEDSETIKRAQEMYANVLLGVEDMEDDQFSQRCERMALREAERRKLRHGKLQKHLDETKADMQFTSEKPSVDESITEVDDAIKDGPPVLAETLTNSLMEDVGPENVDMDIEDNEIFTNQSTMSVPSMLVENEESPKPDEYIDQKDKVQSPLLNGKSPVGVPSEAALRVSTDVSTNISSNGRADIPVDTLITSPADVPNNAPTDAHNITSADGHIENIEQEVVFPDLVFDEDRLTPLKQLLIDSTTGFTVDQLLHLHSFLYQIIWNTKSEWNRNSVVDECERAVKEFMINALQ.

Positions 1 to 11 (MKEEASEHGGS) are enriched in basic and acidic residues. Disordered stretches follow at residues 1-185 (MKEE…RKTH) and 204-253 (YIDS…DLAD). Composition is skewed to acidic residues over residues 52 to 62 (QEDEGDEDWEE) and 82 to 106 (SEGDDEPFEVSESSALEDELSDSED). Positions 112–131 (VRSKPKYKPGTRRSTRLRNR) are enriched in basic residues. Over residues 141–152 (EEHRPILRERTS) the composition is skewed to basic and acidic residues. ATP is bound at residue 309–314 (PGTGKT). Residues 794–922 (RLLNKLKIKL…ANVLLGVEDM (129 aa)) form the Bromo domain.

Belongs to the AAA ATPase family. In terms of assembly, homohexamer. Interacts with the FACT complex subunits spt16 and pob3. Interacts with histone H3-H4 (via N-terminus).

It is found in the nucleus. It localises to the chromosome. It catalyses the reaction ATP + H2O = ADP + phosphate + H(+). Functionally, ATPase histone chaperone which facilitates loading of histone H3-H4 onto DNA in an ATP-dependent manner. Plays a genome-wide role in nucleosome organization and establishment of chromatin. Also plays a role in heterochromatin assembly by stabilizing recruitment of the histone methyltransferase clr4 to methylated histone H3, to promote the transition from H3K9me2 to H3K9me3. This is ATPase histone chaperone abo1 from Schizosaccharomyces pombe (strain 972 / ATCC 24843) (Fission yeast).